A 322-amino-acid chain; its full sequence is DNA repair and recombination protein RadA (322 aa).

105–112 contacts ATP; sequence GMFGSGKT.

The protein belongs to the eukaryotic RecA-like protein family.

Its function is as follows. Involved in DNA repair and in homologous recombination. Binds and assemble on single-stranded DNA to form a nucleoprotein filament. Hydrolyzes ATP in a ssDNA-dependent manner and promotes DNA strand exchange between homologous DNA molecules. The sequence is that of DNA repair and recombination protein RadA from Methanococcus maripaludis (strain DSM 14266 / JCM 13030 / NBRC 101832 / S2 / LL).